The following is a 511-amino-acid chain: Bifunctional purine biosynthesis protein PurH (511 aa).

The MGS-like domain maps to 1 to 147 (MIQIKRALIS…KNYKHTLVLT (147 aa)).

Belongs to the PurH family.

The enzyme catalyses (6R)-10-formyltetrahydrofolate + 5-amino-1-(5-phospho-beta-D-ribosyl)imidazole-4-carboxamide = 5-formamido-1-(5-phospho-D-ribosyl)imidazole-4-carboxamide + (6S)-5,6,7,8-tetrahydrofolate. It carries out the reaction IMP + H2O = 5-formamido-1-(5-phospho-D-ribosyl)imidazole-4-carboxamide. It participates in purine metabolism; IMP biosynthesis via de novo pathway; 5-formamido-1-(5-phospho-D-ribosyl)imidazole-4-carboxamide from 5-amino-1-(5-phospho-D-ribosyl)imidazole-4-carboxamide (10-formyl THF route): step 1/1. It functions in the pathway purine metabolism; IMP biosynthesis via de novo pathway; IMP from 5-formamido-1-(5-phospho-D-ribosyl)imidazole-4-carboxamide: step 1/1. This Leptospira interrogans serogroup Icterohaemorrhagiae serovar Lai (strain 56601) protein is Bifunctional purine biosynthesis protein PurH.